Reading from the N-terminus, the 303-residue chain is Glycine--tRNA ligase alpha subunit (303 aa).

Belongs to the class-II aminoacyl-tRNA synthetase family. In terms of assembly, tetramer of two alpha and two beta subunits.

It localises to the cytoplasm. It catalyses the reaction tRNA(Gly) + glycine + ATP = glycyl-tRNA(Gly) + AMP + diphosphate. This chain is Glycine--tRNA ligase alpha subunit, found in Klebsiella pneumoniae (strain 342).